Here is a 190-residue protein sequence, read N- to C-terminus: Glutathione peroxidase 2 (190 aa).

The active site involves U40. Position 40 (U40) is a non-standard amino acid, selenocysteine.

Belongs to the glutathione peroxidase family. In terms of assembly, homotetramer. In terms of tissue distribution, exclusively expressed in the stomach and small intestine.

Its subcellular location is the cytoplasm. The protein resides in the cytosol. It catalyses the reaction 2 glutathione + H2O2 = glutathione disulfide + 2 H2O. It carries out the reaction a hydroperoxy polyunsaturated fatty acid + 2 glutathione = a hydroxy polyunsaturated fatty acid + glutathione disulfide + H2O. The catalysed reaction is tert-butyl hydroperoxide + 2 glutathione = tert-butanol + glutathione disulfide + H2O. The enzyme catalyses cumene hydroperoxide + 2 glutathione = 2-phenylpropan-2-ol + glutathione disulfide + H2O. It catalyses the reaction (13S)-hydroperoxy-(9Z,11E)-octadecadienoate + 2 glutathione = (13S)-hydroxy-(9Z,11E)-octadecadienoate + glutathione disulfide + H2O. It carries out the reaction (5S)-hydroperoxy-(6E,8Z,11Z,14Z)-eicosatetraenoate + 2 glutathione = (5S)-hydroxy-(6E,8Z,11Z,14Z)-eicosatetraenoate + glutathione disulfide + H2O. The catalysed reaction is (12R)-hydroperoxy-(5Z,8Z,10E,14Z)-eicosatetraenoate + 2 glutathione = (12R)-hydroxy-(5Z,8Z,10E,14Z)-eicosatetraenoate + glutathione disulfide + H2O. The enzyme catalyses (15S)-hydroperoxy-(5Z,8Z,11Z,13E)-eicosatetraenoate + 2 glutathione = (15S)-hydroxy-(5Z,8Z,11Z,13E)-eicosatetraenoate + glutathione disulfide + H2O. Functionally, catalyzes the reduction of hydroperoxides in a glutathione-dependent manner thus regulating cellular redox homeostasis. Can reduce small soluble hydroperoxides such as H2O2, cumene hydroperoxide and tert-butyl hydroperoxide, as well as several fatty acid-derived hydroperoxides. Cannot reduce phosphatidycholine hydroperoxide. The sequence is that of Glutathione peroxidase 2 (GPX2) from Macaca fuscata fuscata (Japanese macaque).